A 504-amino-acid chain; its full sequence is Peptidyl-prolyl cis-trans isomerase-like 4 (504 aa).

A PPIase cyclophilin-type domain is found at 1–169 (MSVMLETSLG…QNIRIRHVEI (169 aa)). In terms of domain architecture, RRM spans 246-324 (NILFVCKLNP…RRIWVDFSQS (79 aa)). Residues 330–339 (RSMLSSSNPT) are compositionally biased toward polar residues. The interval 330-504 (RSMLSSSNPT…RERDDRDRRR (175 aa)) is disordered. A compositionally biased stretch (gly residues) spans 340 to 354 (GRGGRGGRGGRGGNY). Basic and acidic residues-rich tracts occupy residues 356 to 381 (GRRD…DSRR) and 416 to 504 (SKRD…DRRR).

The protein belongs to the cyclophilin-type PPIase family. PPIL4 subfamily.

The protein localises to the nucleus. It catalyses the reaction [protein]-peptidylproline (omega=180) = [protein]-peptidylproline (omega=0). In terms of biological role, PPIases accelerate the folding of proteins. It catalyzes the cis-trans isomerization of proline imidic peptide bonds in oligopeptides. This is Peptidyl-prolyl cis-trans isomerase-like 4 (CYP6) from Cryptococcus neoformans var. neoformans serotype D (strain B-3501A) (Filobasidiella neoformans).